The primary structure comprises 541 residues: Atrial natriuretic peptide receptor 3 (541 aa).

Positions Met-1–Gly-26 are cleaved as a signal peptide. Residues Gly-27–Glu-481 lie on the Extracellular side of the membrane. Asn-86 carries N-linked (GlcNAc...) (complex) asparagine glycosylation. 3 residues coordinate chloride: Ser-106, Val-135, and Cys-136. Disulfide bonds link Cys-108-Cys-136 and Cys-213-Cys-261. The N-linked (GlcNAc...) (high mannose) asparagine glycan is linked to Asn-293. An N-linked (GlcNAc...) (complex) asparagine glycan is attached at Asn-394. Residues Ser-482–Phe-504 form a helical membrane-spanning segment. The Cytoplasmic segment spans residues Arg-505 to Ala-541.

This sequence belongs to the ANF receptor family. As to quaternary structure, homodimer; disulfide-linked. Dimers can also be formed through the C-terminal cysteine of isoform 2. Interacts with OSTN.

The protein localises to the cell membrane. Receptor for the natriuretic peptide hormones, binding with similar affinities atrial natriuretic peptide NPPA/ANP, brain natriuretic peptide NPPB/BNP, and C-type natriuretic peptide NPPC/CNP. May function as a clearance receptor for NPPA, NPPB and NPPC, regulating their local concentrations and effects. Acts as a regulator of osteoblast differentiation and bone growth by binding to its ligand osteocrin, thereby preventing binding between NPR3/NPR-C and natriuretic peptides, leading to increase cGMP production. This Homo sapiens (Human) protein is Atrial natriuretic peptide receptor 3 (NPR3).